Reading from the N-terminus, the 806-residue chain is Leucine--tRNA ligase (806 aa).

The 'HIGH' region motif lies at 40 to 51; that stretch reads PYPSGKGLHVGH. The 'KMSKS' region signature appears at 580 to 584; the sequence is KMSKS. Lys-583 contacts ATP.

Belongs to the class-I aminoacyl-tRNA synthetase family.

It is found in the cytoplasm. It catalyses the reaction tRNA(Leu) + L-leucine + ATP = L-leucyl-tRNA(Leu) + AMP + diphosphate. The protein is Leucine--tRNA ligase of Ureaplasma parvum serovar 3 (strain ATCC 27815 / 27 / NCTC 11736).